The sequence spans 204 residues: Small ribosomal subunit protein uS7 (204 aa).

This sequence belongs to the universal ribosomal protein uS7 family. As to quaternary structure, part of the 30S ribosomal subunit.

One of the primary rRNA binding proteins, it binds directly to 16S rRNA where it nucleates assembly of the head domain of the 30S subunit. Is located at the subunit interface close to the decoding center. This Methanoregula boonei (strain DSM 21154 / JCM 14090 / 6A8) protein is Small ribosomal subunit protein uS7.